Here is a 150-residue protein sequence, read N- to C-terminus: C-type lectin 37Db (150 aa).

Positions 1-20 (MMVKLLLLFLVCWSALPLES) are cleaved as a signal peptide. A C-type lectin domain is found at 31–148 (IGEKQYYISL…CYSSVAFICQ (118 aa)). 2 disulfide bridges follow: Cys-52–Cys-147 and Cys-122–Cys-139. 2 N-linked (GlcNAc...) asparagine glycosylation sites follow: Asn-107 and Asn-115.

The protein localises to the secreted. Its function is as follows. Galactose-specific lectin that displays calcium-dependent activity. Binds to the surface of hemocytes and enhances hemocyte encapsulation and melanization. This is likely by interacting with carbohydrates on the surface of the hemocytes. Also displays agglutination activity against the Gram-negative bacterium E.coli. This Drosophila melanogaster (Fruit fly) protein is C-type lectin 37Db.